We begin with the raw amino-acid sequence, 102 residues long: Large ribosomal subunit protein bL21 (102 aa).

This sequence belongs to the bacterial ribosomal protein bL21 family. In terms of assembly, part of the 50S ribosomal subunit. Contacts protein L20.

Its function is as follows. This protein binds to 23S rRNA in the presence of protein L20. The chain is Large ribosomal subunit protein bL21 from Agathobacter rectalis (strain ATCC 33656 / DSM 3377 / JCM 17463 / KCTC 5835 / VPI 0990) (Eubacterium rectale).